Here is a 333-residue protein sequence, read N- to C-terminus: Holliday junction branch migration complex subunit RuvB (333 aa).

The interval 1 to 182 (MDERLLSGES…FGVLSRLEYY (182 aa)) is large ATPase domain (RuvB-L). Residues Leu21, Arg22, Gly63, Lys66, Thr67, Thr68, 129 to 131 (EDF), Arg172, Tyr182, and Arg219 contribute to the ATP site. Thr67 contributes to the Mg(2+) binding site. Residues 183–253 (TVDQLSAIVE…ITQMALELLQ (71 aa)) form a small ATPAse domain (RuvB-S) region. Residues 256-333 (KLGLDHIDHK…QHFGMEMPKI (78 aa)) are head domain (RuvB-H). Arg311 and Arg316 together coordinate DNA.

The protein belongs to the RuvB family. As to quaternary structure, homohexamer. Forms an RuvA(8)-RuvB(12)-Holliday junction (HJ) complex. HJ DNA is sandwiched between 2 RuvA tetramers; dsDNA enters through RuvA and exits via RuvB. An RuvB hexamer assembles on each DNA strand where it exits the tetramer. Each RuvB hexamer is contacted by two RuvA subunits (via domain III) on 2 adjacent RuvB subunits; this complex drives branch migration. In the full resolvosome a probable DNA-RuvA(4)-RuvB(12)-RuvC(2) complex forms which resolves the HJ.

The protein localises to the cytoplasm. It catalyses the reaction ATP + H2O = ADP + phosphate + H(+). In terms of biological role, the RuvA-RuvB-RuvC complex processes Holliday junction (HJ) DNA during genetic recombination and DNA repair, while the RuvA-RuvB complex plays an important role in the rescue of blocked DNA replication forks via replication fork reversal (RFR). RuvA specifically binds to HJ cruciform DNA, conferring on it an open structure. The RuvB hexamer acts as an ATP-dependent pump, pulling dsDNA into and through the RuvAB complex. RuvB forms 2 homohexamers on either side of HJ DNA bound by 1 or 2 RuvA tetramers; 4 subunits per hexamer contact DNA at a time. Coordinated motions by a converter formed by DNA-disengaged RuvB subunits stimulates ATP hydrolysis and nucleotide exchange. Immobilization of the converter enables RuvB to convert the ATP-contained energy into a lever motion, pulling 2 nucleotides of DNA out of the RuvA tetramer per ATP hydrolyzed, thus driving DNA branch migration. The RuvB motors rotate together with the DNA substrate, which together with the progressing nucleotide cycle form the mechanistic basis for DNA recombination by continuous HJ branch migration. Branch migration allows RuvC to scan DNA until it finds its consensus sequence, where it cleaves and resolves cruciform DNA. In Bacillus cytotoxicus (strain DSM 22905 / CIP 110041 / 391-98 / NVH 391-98), this protein is Holliday junction branch migration complex subunit RuvB.